Here is a 361-residue protein sequence, read N- to C-terminus: Phosphoserine aminotransferase (361 aa).

An L-glutamate-binding site is contributed by Arg42. Residues 76 to 77 (AR), Trp102, Thr153, Asp173, and Gln196 contribute to the pyridoxal 5'-phosphate site. Lys197 carries the post-translational modification N6-(pyridoxal phosphate)lysine. 238–239 (NT) is a binding site for pyridoxal 5'-phosphate.

This sequence belongs to the class-V pyridoxal-phosphate-dependent aminotransferase family. SerC subfamily. In terms of assembly, homodimer. Requires pyridoxal 5'-phosphate as cofactor.

The protein localises to the cytoplasm. The catalysed reaction is O-phospho-L-serine + 2-oxoglutarate = 3-phosphooxypyruvate + L-glutamate. It carries out the reaction 4-(phosphooxy)-L-threonine + 2-oxoglutarate = (R)-3-hydroxy-2-oxo-4-phosphooxybutanoate + L-glutamate. It participates in amino-acid biosynthesis; L-serine biosynthesis; L-serine from 3-phospho-D-glycerate: step 2/3. It functions in the pathway cofactor biosynthesis; pyridoxine 5'-phosphate biosynthesis; pyridoxine 5'-phosphate from D-erythrose 4-phosphate: step 3/5. In terms of biological role, catalyzes the reversible conversion of 3-phosphohydroxypyruvate to phosphoserine and of 3-hydroxy-2-oxo-4-phosphonooxybutanoate to phosphohydroxythreonine. This Buchnera aphidicola subsp. Schizaphis graminum (strain Sg) protein is Phosphoserine aminotransferase.